A 198-amino-acid polypeptide reads, in one-letter code: Sortase D (198 aa).

Residues 7 to 25 traverse the membrane as a helical segment; sequence LFIIAAGLVIAGYGGFKLI. The segment covering 36 to 46 has biased composition (basic and acidic residues); the sequence is KEAKLAAKKPQ. Positions 36-67 are disordered; the sequence is KEAKLAAKKPQEASGTKNSTDQAKNKASFKPE. Residues 48-57 show a composition bias toward polar residues; the sequence is ASGTKNSTDQ. The active-site Proton donor/acceptor is the histidine 119. The active-site Acyl-thioester intermediate is cysteine 177.

This sequence belongs to the bacterial sortase family. Class D subfamily.

The protein localises to the cell membrane. Transpeptidase that anchors surface proteins to the cell wall. Recognizes and modifies its substrate by proteolytic cleavage of a C-terminal sorting signal. Following cleavage, a covalent intermediate is formed via a thioester bond between the sortase and its substrate, which is then transferred and covalently attached to the cell wall. This sortase recognizes a Leu-Pro-Asp-Thr-Ser/Ala (LPDTS/A) motif. It has two substrates, YhcR and YfkN. The sequence is that of Sortase D from Bacillus subtilis (strain 168).